The following is a 141-amino-acid chain: Putative antiporter subunit mnhB2 (141 aa).

4 helical membrane-spanning segments follow: residues 10–30 (TVTK…FLAG), 35–55 (GGGF…FLAF), 70–90 (ILMI…MFFG), and 116–136 (VFEA…MLSI).

Belongs to the CPA3 antiporters (TC 2.A.63) subunit B family. As to quaternary structure, may form a heterooligomeric complex that consists of seven subunits: mnhA2, mnhB2, mnhC2, mnhD2, mnhE2, mnhF2 and mnhG2.

Its subcellular location is the cell membrane. In Staphylococcus saprophyticus subsp. saprophyticus (strain ATCC 15305 / DSM 20229 / NCIMB 8711 / NCTC 7292 / S-41), this protein is Putative antiporter subunit mnhB2 (mnhB2).